Consider the following 896-residue polypeptide: Protein translocase subunit SecA (896 aa).

Residues glutamine 87, 105–109 (GEGKT), and aspartate 512 contribute to the ATP site. The segment at 858 to 886 (RAGGEAEAAKPVVRDEKKVGRNDPCPCGS) is disordered. The span at 869–878 (VVRDEKKVGR) shows a compositional bias: basic and acidic residues. Zn(2+) is bound by residues cysteine 882, cysteine 884, cysteine 893, and cysteine 894.

The protein belongs to the SecA family. In terms of assembly, monomer and homodimer. Part of the essential Sec protein translocation apparatus which comprises SecA, SecYEG and auxiliary proteins SecDF-YajC and YidC. Requires Zn(2+) as cofactor.

The protein resides in the cell inner membrane. It localises to the cytoplasm. The enzyme catalyses ATP + H2O + cellular proteinSide 1 = ADP + phosphate + cellular proteinSide 2.. In terms of biological role, part of the Sec protein translocase complex. Interacts with the SecYEG preprotein conducting channel. Has a central role in coupling the hydrolysis of ATP to the transfer of proteins into and across the cell membrane, serving as an ATP-driven molecular motor driving the stepwise translocation of polypeptide chains across the membrane. The polypeptide is Protein translocase subunit SecA (Syntrophotalea carbinolica (strain DSM 2380 / NBRC 103641 / GraBd1) (Pelobacter carbinolicus)).